The primary structure comprises 1059 residues: Potassium transporter TRK1 (1059 aa).

Topologically, residues 1–46 (MLYRVSGFYKRHTRNFTNIDYGYYIRNFIHHIASKIYPYAKVVLPN) are cytoplasmic. The chain crosses the membrane as a helical span at residues 47 to 67 (FRAAHYFYILTLVILGSILVY). Topologically, residues 68–73 (PVKTCA) are extracellular. Residues 74 to 90 (YIDVLFFTAGASTQAGL) lie within the membrane without spanning it. Residues 91–99 (NTVNVNDLS) are Extracellular-facing. Residues 100–122 (LYQQIVLYLLATLATPIFIHGSL) traverse the membrane as a helical segment. At 123–625 (LFVRLYYFER…LGGIEYRAVK (503 aa)) the chain is on the cytoplasmic side. Disordered stretches follow at residues 180–276 (REAE…IDPE), 304–350 (IGSP…EDED), and 404–574 (PWTS…SIEN). Positions 186–203 (SSSSPQSSSSQTSQPVST) are enriched in low complexity. Basic and acidic residues predominate over residues 236-245 (EKIHFEEPQR). Residues 335–344 (PATNSVGTGN) are compositionally biased toward polar residues. Low complexity predominate over residues 412–423 (TLSNSSKKGSLS). 2 stretches are compositionally biased toward acidic residues: residues 428–449 (DTEDDSEDEEYASIDSETSDIS) and 469–490 (YEEDEDEDEHNSDDDDDDDDGE). Positions 524 to 536 (RSNTLDTPQQNTS) are enriched in polar residues. Over residues 540–552 (KIRKKAPKRKTPR) the composition is skewed to basic residues. A compositionally biased stretch (polar residues) spans 556-566 (NASFNQHSNVS). A helical transmembrane segment spans residues 626–649 (LLIKIIVVYYVGFNIIPGVMLSIW). The Extracellular segment spans residues 650–668 (IYCMPHYKNLMISSSISPA). Residues 669–685 (WWAFFTSQSSFNDLGLT) lie within the membrane without spanning it. At 686-696 (LTSNSMMSFNQ) the chain is on the extracellular side. The chain crosses the membrane as a helical span at residues 697–713 (NAFVQILCSFLIVIGNT). Topologically, residues 714 to 757 (GFPILLRFIIWVMFKTARPLSLYKESLGFLLDHPRRCFTLLFPS) are cytoplasmic. A helical transmembrane segment spans residues 758-781 (VPTWWLFFILVVLNGFDLVIFCIL). Topologically, residues 782-796 (DLHDDTFKGVDMGYR) are extracellular. An intramembrane segment occupies 797–813 (VLNGLFQAFCTRTVGFS). At 814–820 (VMDLSQL) the chain is on the extracellular side. A helical transmembrane segment spans residues 821 to 844 (HAATQVSYLIMMYISVLPIAISVR). The Cytoplasmic portion of the chain corresponds to 845–877 (RTNVYEEQSLGVYAKENAEGVDESAPSNYVGSH). The chain crosses the membrane as a helical span at residues 878–899 (LRNQLSYDLWYICLGLFIICIA). The Extracellular portion of the chain corresponds to 900–912 (EGKRLKEQDLRFS). Residues 913–931 (IFAVLFEIVSAYGTVGMSM) lie within the membrane without spanning it. Residues 932–945 (GYPGVDCSLSGEFN) are Extracellular-facing. Residues 946 to 968 (VISKLVIIAMMIRGRHRGLPYTI) traverse the membrane as a helical segment. At 969–1059 (DRAIMLPNAA…RYVVRTVSEV (91 aa)) the chain is on the cytoplasmic side.

Belongs to the TrkH potassium transport family.

Its subcellular location is the cell membrane. The enzyme catalyses K(+)(in) = K(+)(out). It catalyses the reaction chloride(in) = chloride(out). TRK1-mediated chloride conductance is blocked by 4,4'-diisothiocyanatostilbene-2,2'-disulfonic acid. In terms of biological role, potassium transporter that mediates K(+) influx, as well as Cl(-) efflux as a secondary function. TRK1 is the major K(+) uptake transporter that regulates membrane potential and intracellular pH. The TRK1-mediated Cl(-) efflux should serve as a Cl(-) detoxification route and may play a role in sustaining C.albicans on mammalian epithelial surfaces, or in physiological saline solutions such as saliva. Functionally, mediates candidacidal activities of cysteine-free peptides, but not of defensins. The hallmark of salivary gland-secreted histatin-5 (Hst 5) killing of C.albicans is the rapid efflux of cellular ATP and other small nucleotides and ions from the cell as well as concurrent intracellular uptake of propidium iodide (PI). TRK1 is the channel for Hst 5-induced killing and histatin-5 may directly or indirectly alter TRK1 function, allowing the efflux of larger anions, including ATP, and the influx of small cationic dyes, such as PI. This Candida albicans (Yeast) protein is Potassium transporter TRK1.